Here is a 462-residue protein sequence, read N- to C-terminus: Nuclear distribution protein PAC1 (462 aa).

In terms of domain architecture, LisH spans 9-41 (QAEELHKAIIAYLGVINAPKTAAAFREEVNFSA). A coiled-coil region spans residues 60-87 (TSVVRLQKKVLELEQRNQSLQSELDSTT). The segment covering 78-99 (SLQSELDSTTPTSLLRRNQDPS) has biased composition (polar residues). The disordered stretch occupies residues 78–103 (SLQSELDSTTPTSLLRRNQDPSSWLP). WD repeat units follow at residues 113-154 (SHRS…RTVK), 156-196 (HTKG…KNIR), 200-247 (GHDH…CVKT), 250-289 (GHAD…AKCT), 292-352 (GHEH…IKTL), 354-393 (GHDN…RCVK), 398-445 (AHSH…AGIR), and 447-462 (VIAT…IFAS). The tract at residues 414-434 (KDAPTNGDAPNGTTANGASKK) is disordered.

This sequence belongs to the WD repeat LIS1/nudF family. Self-associates. Interacts with NDL1 and dynein.

The protein resides in the cytoplasm. It is found in the cytoskeleton. The protein localises to the spindle pole. Functionally, positively regulates the activity of the minus-end directed microtubule motor protein dynein. May enhance dynein-mediated microtubule sliding by targeting dynein to the microtubule plus end. Required for nuclear migration during vegetative growth as well as development. Required for retrograde early endosome (EE) transport from the hyphal tip. Required for localization of dynein to the mitotic spindle poles. Recruits additional proteins to the dynein complex at SPBs. The chain is Nuclear distribution protein PAC1 from Phaeosphaeria nodorum (strain SN15 / ATCC MYA-4574 / FGSC 10173) (Glume blotch fungus).